A 79-amino-acid chain; its full sequence is Sec-independent protein translocase protein TatA (79 aa).

The helical transmembrane segment at 1–21 threads the bilayer; that stretch reads MGGISIWQLLIIALIVILLFG. The disordered stretch occupies residues 42–79; it reads AMTSETSEEEKKALEDSQTAQTSQQAEKKPESKDKEQA. Residues 57–66 show a composition bias toward polar residues; it reads DSQTAQTSQQ. The segment covering 67–79 has biased composition (basic and acidic residues); sequence AEKKPESKDKEQA.

It belongs to the TatA/E family. In terms of assembly, the Tat system comprises two distinct complexes: a TatABC complex, containing multiple copies of TatA, TatB and TatC subunits, and a separate TatA complex, containing only TatA subunits. Substrates initially bind to the TatABC complex, which probably triggers association of the separate TatA complex to form the active translocon.

Its subcellular location is the cell inner membrane. In terms of biological role, part of the twin-arginine translocation (Tat) system that transports large folded proteins containing a characteristic twin-arginine motif in their signal peptide across membranes. TatA could form the protein-conducting channel of the Tat system. This chain is Sec-independent protein translocase protein TatA, found in Shewanella denitrificans (strain OS217 / ATCC BAA-1090 / DSM 15013).